The primary structure comprises 344 residues: Methionine import ATP-binding protein MetN (344 aa).

The region spanning 2-241 is the ABC transporter domain; the sequence is IEINQVNKVF…PKTELAHDFI (240 aa). 38–45 provides a ligand contact to ATP; the sequence is GSSGAGKS.

It belongs to the ABC transporter superfamily. Methionine importer (TC 3.A.1.24) family. As to quaternary structure, the complex is composed of two ATP-binding proteins (MetN), two transmembrane proteins (MetI) and a solute-binding protein (MetQ).

It localises to the cell inner membrane. It carries out the reaction L-methionine(out) + ATP + H2O = L-methionine(in) + ADP + phosphate + H(+). The enzyme catalyses D-methionine(out) + ATP + H2O = D-methionine(in) + ADP + phosphate + H(+). Its function is as follows. Part of the ABC transporter complex MetNIQ involved in methionine import. Responsible for energy coupling to the transport system. The protein is Methionine import ATP-binding protein MetN of Vibrio vulnificus (strain YJ016).